Consider the following 308-residue polypeptide: Ribonuclease Z (308 aa).

Zn(2+)-binding residues include His-61, His-63, Asp-65, His-66, His-139, Asp-210, and His-268. Catalysis depends on Asp-65, which acts as the Proton acceptor.

This sequence belongs to the RNase Z family. Homodimer. Zn(2+) is required as a cofactor.

The enzyme catalyses Endonucleolytic cleavage of RNA, removing extra 3' nucleotides from tRNA precursor, generating 3' termini of tRNAs. A 3'-hydroxy group is left at the tRNA terminus and a 5'-phosphoryl group is left at the trailer molecule.. Zinc phosphodiesterase, which displays some tRNA 3'-processing endonuclease activity. Probably involved in tRNA maturation, by removing a 3'-trailer from precursor tRNA. This chain is Ribonuclease Z, found in Natronomonas pharaonis (strain ATCC 35678 / DSM 2160 / CIP 103997 / JCM 8858 / NBRC 14720 / NCIMB 2260 / Gabara) (Halobacterium pharaonis).